Here is a 181-residue protein sequence, read N- to C-terminus: Resolvase/recombinase (181 aa).

The 136-residue stretch at 2–137 (RLFGYARVST…EGRLEAKAKG (136 aa)) folds into the Resolvase/invertase-type recombinase catalytic domain. S10 (O-(5'-phospho-DNA)-serine intermediate) is an active-site residue. Positions 161–180 (AMEIAKRLKIGRSTVYKVLA) form a DNA-binding region, H-T-H motif.

It belongs to the site-specific recombinase resolvase family.

In terms of biological role, site-specific recombination protein. The polypeptide is Resolvase/recombinase (Pseudomonas putida (Arthrobacter siderocapsulatus)).